Consider the following 278-residue polypeptide: Potassium/proton antiporter CemA (278 aa).

The next 4 helical transmembrane spans lie at I61 to G81, A155 to T175, I203 to I223, and F238 to I258.

Belongs to the CemA family.

The protein resides in the plastid. It localises to the chloroplast inner membrane. It carries out the reaction K(+)(in) + H(+)(out) = K(+)(out) + H(+)(in). Contributes to K(+)/H(+) antiport activity by supporting proton efflux to control proton extrusion and homeostasis in chloroplasts in a light-dependent manner to modulate photosynthesis. Prevents excessive induction of non-photochemical quenching (NPQ) under continuous-light conditions. Indirectly promotes efficient inorganic carbon uptake into chloroplasts. The chain is Potassium/proton antiporter CemA from Porphyra purpurea (Red seaweed).